A 37-amino-acid chain; its full sequence is Large ribosomal subunit protein bL36 (37 aa).

This sequence belongs to the bacterial ribosomal protein bL36 family.

The polypeptide is Large ribosomal subunit protein bL36 (Aromatoleum aromaticum (strain DSM 19018 / LMG 30748 / EbN1) (Azoarcus sp. (strain EbN1))).